We begin with the raw amino-acid sequence, 259 residues long: MTFPNINPIIFSIGPLAVSWYSLSYVVGILLGWFYANKIIEKFKPQITKKNLEDFITYAVIGIIVGGRLGFVLLYNPSRYFSNPIDILKTYEGGMSFHGGALGVIIAAYLFCRKYKINFLSLTDIIAPVVPIGLFLGRIANFINGELYGRITNSSFGMIFPNSDLMPRHPSQLYEAFFEGLVLFCILAYATFKHKTLKKYGLNSGIFLIFYALFRIAIEIFREPDIQIGFILDSLTMGQILSVPMLLLGSYLICQSNPK.

Transmembrane regions (helical) follow at residues 9-29 (IIFS…VVGI), 55-75 (FITY…VLLY), 92-112 (EGGM…YLFC), and 117-137 (INFL…LFLG). Residue Arg-138 participates in a 1,2-diacyl-sn-glycero-3-phospho-(1'-sn-glycerol) binding. A run of 3 helical transmembrane segments spans residues 172–192 (QLYE…YATF), 201–221 (GLNS…IEIF), and 228–248 (IGFI…MLLL).

It belongs to the Lgt family.

The protein resides in the cell inner membrane. The catalysed reaction is L-cysteinyl-[prolipoprotein] + a 1,2-diacyl-sn-glycero-3-phospho-(1'-sn-glycerol) = an S-1,2-diacyl-sn-glyceryl-L-cysteinyl-[prolipoprotein] + sn-glycerol 1-phosphate + H(+). Its pathway is protein modification; lipoprotein biosynthesis (diacylglyceryl transfer). Functionally, catalyzes the transfer of the diacylglyceryl group from phosphatidylglycerol to the sulfhydryl group of the N-terminal cysteine of a prolipoprotein, the first step in the formation of mature lipoproteins. This Rickettsia felis (strain ATCC VR-1525 / URRWXCal2) (Rickettsia azadi) protein is Phosphatidylglycerol--prolipoprotein diacylglyceryl transferase.